A 238-amino-acid polypeptide reads, in one-letter code: Ribonuclease PH (238 aa).

Phosphate contacts are provided by residues Arg86 and 124 to 126; that span reads GTR.

This sequence belongs to the RNase PH family. As to quaternary structure, homohexameric ring arranged as a trimer of dimers.

It carries out the reaction tRNA(n+1) + phosphate = tRNA(n) + a ribonucleoside 5'-diphosphate. Phosphorolytic 3'-5' exoribonuclease that plays an important role in tRNA 3'-end maturation. Removes nucleotide residues following the 3'-CCA terminus of tRNAs; can also add nucleotides to the ends of RNA molecules by using nucleoside diphosphates as substrates, but this may not be physiologically important. Probably plays a role in initiation of 16S rRNA degradation (leading to ribosome degradation) during starvation. This is Ribonuclease PH from Histophilus somni (strain 129Pt) (Haemophilus somnus).